The primary structure comprises 209 residues: Type III pantothenate kinase (209 aa).

An ATP-binding site is contributed by 5–12 (DIGNSNAN). Substrate is bound by residues tyrosine 68 and 72-75 (GIDR). Residue aspartate 74 is the Proton acceptor of the active site. Residue aspartate 89 participates in K(+) binding. Residue serine 92 coordinates ATP. Threonine 144 lines the substrate pocket.

Belongs to the type III pantothenate kinase family. In terms of assembly, homodimer. It depends on NH4(+) as a cofactor. K(+) is required as a cofactor.

Its subcellular location is the cytoplasm. It carries out the reaction (R)-pantothenate + ATP = (R)-4'-phosphopantothenate + ADP + H(+). The protein operates within cofactor biosynthesis; coenzyme A biosynthesis; CoA from (R)-pantothenate: step 1/5. Its function is as follows. Catalyzes the phosphorylation of pantothenate (Pan), the first step in CoA biosynthesis. This Campylobacter jejuni (strain RM1221) protein is Type III pantothenate kinase.